The primary structure comprises 276 residues: Diaminopimelate epimerase (276 aa).

Substrate-binding residues include Asn-13, Gln-46, and Asn-66. The Proton donor role is filled by Cys-75. Substrate-binding positions include 76 to 77 (GN), Asn-159, Asn-192, and 210 to 211 (ER). The active-site Proton acceptor is the Cys-219. 220–221 (GS) is a binding site for substrate.

It belongs to the diaminopimelate epimerase family. In terms of assembly, homodimer.

Its subcellular location is the cytoplasm. It carries out the reaction (2S,6S)-2,6-diaminopimelate = meso-2,6-diaminopimelate. It functions in the pathway amino-acid biosynthesis; L-lysine biosynthesis via DAP pathway; DL-2,6-diaminopimelate from LL-2,6-diaminopimelate: step 1/1. Catalyzes the stereoinversion of LL-2,6-diaminopimelate (L,L-DAP) to meso-diaminopimelate (meso-DAP), a precursor of L-lysine and an essential component of the bacterial peptidoglycan. This chain is Diaminopimelate epimerase, found in Aliivibrio fischeri (strain ATCC 700601 / ES114) (Vibrio fischeri).